The following is a 225-amino-acid chain: E3 ubiquitin-protein ligase ATL59 (225 aa).

A helical membrane pass occupies residues 22-42 (FTFIVCVPICVILIVLLVLYI). The RING-type; atypical zinc-finger motif lies at 97–139 (CSVCLGDYQAEEKLQQMPSCGHTFHMECIDLWLTSHTTCPLCR).

This sequence belongs to the RING-type zinc finger family. ATL subfamily.

The protein resides in the membrane. It carries out the reaction S-ubiquitinyl-[E2 ubiquitin-conjugating enzyme]-L-cysteine + [acceptor protein]-L-lysine = [E2 ubiquitin-conjugating enzyme]-L-cysteine + N(6)-ubiquitinyl-[acceptor protein]-L-lysine.. Its pathway is protein modification; protein ubiquitination. E3 ubiquitin-protein ligase able to catalyze polyubiquitination with ubiquitin-conjugating enzyme E2 UBC8, UBC10, UBC11, and UBC34 in vitro. The sequence is that of E3 ubiquitin-protein ligase ATL59 (ATL59) from Arabidopsis thaliana (Mouse-ear cress).